Reading from the N-terminus, the 290-residue chain is Cell division protein ZipA (290 aa).

Position 1 (Met1) is a topological domain, periplasmic. The helical transmembrane segment at 2–22 threads the bilayer; it reads DIGLREWLIVIGLIVIAGILF. Residues 23–290 lie on the Cytoplasmic side of the membrane; sequence DGWRRMRGGK…HERRSLMQKR (268 aa). Positions 66–143 are disordered; the sequence is REPSFDEQDL…REKAPSVAAA (78 aa). A compositionally biased stretch (basic and acidic residues) spans 81–99; that stretch reads REGKERKGGKRQDEPRQGD. Residues 100–114 are compositionally biased toward acidic residues; sequence LDLDEGMALEADPSD.

This sequence belongs to the ZipA family. As to quaternary structure, interacts with FtsZ via their C-terminal domains.

It is found in the cell inner membrane. Functionally, essential cell division protein that stabilizes the FtsZ protofilaments by cross-linking them and that serves as a cytoplasmic membrane anchor for the Z ring. Also required for the recruitment to the septal ring of downstream cell division proteins. The sequence is that of Cell division protein ZipA from Pseudomonas paraeruginosa (strain DSM 24068 / PA7) (Pseudomonas aeruginosa (strain PA7)).